Reading from the N-terminus, the 237-residue chain is Ribosomal RNA small subunit methyltransferase G (237 aa).

S-adenosyl-L-methionine is bound by residues glycine 78, phenylalanine 83, 129-130, and arginine 148; that span reads AE.

The protein belongs to the methyltransferase superfamily. RNA methyltransferase RsmG family.

It localises to the cytoplasm. Its function is as follows. Specifically methylates the N7 position of a guanine in 16S rRNA. This chain is Ribosomal RNA small subunit methyltransferase G, found in Streptococcus pyogenes serotype M3 (strain ATCC BAA-595 / MGAS315).